The following is a 263-amino-acid chain: Oxygen-evolving enhancer protein 2-1, chloroplastic (263 aa).

Ser153 is modified (phosphoserine).

This sequence belongs to the PsbP family. In terms of assembly, interacts with WAK1.

The protein resides in the plastid. It localises to the chloroplast thylakoid lumen. In terms of biological role, may be involved in the regulation of photosystem II. The protein is Oxygen-evolving enhancer protein 2-1, chloroplastic (PSBP1) of Arabidopsis thaliana (Mouse-ear cress).